Consider the following 613-residue polypeptide: UBX domain-containing protein 3 (613 aa).

2 disordered regions span residues 67–223 and 453–472; these read PAAA…PINP and MNEQ…RNQQ. Residues 68 to 82 show a composition bias toward low complexity; sequence AAASGRNAGASSSSR. Basic residues predominate over residues 137 to 149; sequence THHRGAAIPRQKR. Over residues 158–169 the composition is skewed to low complexity; that stretch reads SSSGSSSASFSS. The stretch at 452–517 forms a coiled coil; sequence RMNEQSERRE…EEEECVRRQT (66 aa). One can recognise a UBX domain in the interval 531-610; sequence PLAEIINVKF…KWPAREQIFV (80 aa). Residues 582 to 584 carry the Interaction with cdc-48 motif; sequence FPK.

Forms a complex composed of ubxn-3, cdc-48.1, ufd-1 and npl-4.1. Forms a complex composed of ubxn-3, cdc-48.1 and/or cdc-48.2 and substrate cdt-1. Interacts (via FPK motif) with cdc-48.1 (via N-terminus) and cdc-48.2 (via N-terminus). Interacts (via N-terminus) with cdt-1 and ubiquitinated protein substrates; the interaction is cdc-48-independent. May interact with npl-4.1. Expressed in the germline (at protein level). Expressed in spermatocytes but not in mature sperm (at protein level). Expressed in the spermatheca and nerve cells.

It is found in the nucleus. The protein resides in the cytoplasm. It localises to the perinuclear region. The protein localises to the chromosome. Functionally, ubiquitin-binding protein which acts as an adapter for ATPase cdc-48.1 and/or cdc-48.2, conferring substrate specificity. Together with ubxn-1 and ubxn-2, plays a role in hermaphrodite spermatogenesis probably by promoting the degradation of sex determination terminal factor tra-1. During mitosis, ensures the degradation of DNA licensing factor cdt-1 and the disassembly of the DNA replication CMG helicase complex by promoting the dissociation from chromatin of several of its components including cdc-45 and sld-5. The protein is UBX domain-containing protein 3 of Caenorhabditis elegans.